We begin with the raw amino-acid sequence, 360 residues long: Peptide chain release factor 1 (360 aa).

An N5-methylglutamine modification is found at Gln-237.

This sequence belongs to the prokaryotic/mitochondrial release factor family. Methylated by PrmC. Methylation increases the termination efficiency of RF1.

It is found in the cytoplasm. Peptide chain release factor 1 directs the termination of translation in response to the peptide chain termination codons UAG and UAA. The polypeptide is Peptide chain release factor 1 (Teredinibacter turnerae (strain ATCC 39867 / T7901)).